Here is a 1081-residue protein sequence, read N- to C-terminus: MDSLNDIIDHQTFSQELVEDASEFITVGHHSERPSQSSQQPNSGQDLTMSMQDIISCPVKHRTCSASGSGSASGSDSVVMVIDALGQGNRQSAYQIVPQQLQQRNMPLPFGLLERDRQHMQHGREVNTSPVDFVSSDINLDGLTVDADVSQTDHSQETAVKQEQKLLIVQSKSQDQSHRRIRMLVDVSSVNSGLGVHVDDMDEISSDGVGCDDEGVTLSHQHLLEQEEQFGLTSHHPHLQPHTQIIHGLHQRSTHSEMGLDNGHGEVLSVIVHSQDSDKEDCEENDDGDAEGDLENEDDDERDSRSREQLLSHSSYQTLTSVNDRLSSPGFSQTSYATLTPIQPLPPISTMSEKFAYSGHISGGDSGDTDVNGDGAGGGVVEVGEVTNQSSEATGTVSISSGNATSSVCSNNDCSSFSALSMPIGSGHLGLGVLSGVQSPFSSYEKLSSMISPPPNNYLVSCDLHSSVSGRVINSSHLQLSHNGNKKESGTHEHTHRPADVNGGKFSYTGHISRGDSVDNDVNGEKFSFSDHISGGDSGDEDANREKFIYSDHISEGENGPDVNSGTNWLQMHSEREVRLHMPVPAELEARFHISSERRTRLNVPPARGSLSRHLAPNAPICPADWKADDWKHSNAGVVSLTADMPVVVSLTPTPPPLRDDSVSGIKQNERSSPGHREQYFLDKSQEPSSVVADQCSPGINGTPQSVCVIHQQSPSALGNGFQSSSQQAKVSSCASPKGTVSSGGAVSNRIANSSDMEEINTKDLAQRISAELKRYSIPQAIFAQRVLCRSQGTLSDLLRNPKPWSKLKSGRETFRRMYKWLQEPEFQRMSALRMAAAQIPQRAPLSSGMSLGSATGPSGSTGTIPTDLDPHGGPTMIQNPLTNESDSSPASTPVTSVLVGSVVSCRRKEEPQIEQMPQPKKPRLVFTDLQRRTLQAIFKETKRPSKEMQVTIARQLGLEPTTVGNFFMNARRRSMDKWRDDDSKSTMHVAHSRQQQDEQQKDNAHTHSQSQIQDQNHSQNQAIHNSMSQDPYSNLHTTAMSPLGAFDEDADMDLELESHDFDLVDPDEHGDTNDPNGDML.

Disordered regions lie at residues 274–326 (SQDS…NDRL), 481–504 (SHNGNKKESGTHEHTHRPADVNGG), and 653–688 (PTPPPLRDDSVSGIKQNERSSPGHREQYFLDKSQEP). A compositionally biased stretch (acidic residues) spans 278-301 (DKEDCEENDDGDAEGDLENEDDDE). The segment covering 311–326 (LSHSSYQTLTSVNDRL) has biased composition (polar residues). Composition is skewed to basic and acidic residues over residues 485–499 (NKKESGTHEHTHRPA) and 658–686 (LRDDSVSGIKQNERSSPGHREQYFLDKSQ). Residues 751-837 (IANSSDMEEI…QRMSALRMAA (87 aa)) constitute a DNA-binding region (CUT). Positions 844–875 (APLSSGMSLGSATGPSGSTGTIPTDLDPHGGP) are disordered. The span at 851-867 (SLGSATGPSGSTGTIPT) shows a compositional bias: low complexity. The homeobox DNA-binding region spans 918-977 (PQPKKPRLVFTDLQRRTLQAIFKETKRPSKEMQVTIARQLGLEPTTVGNFFMNARRRSMD). Residues 978–1081 (KWRDDDSKST…DTNDPNGDML (104 aa)) are disordered. Residues 995–1006 (QQQDEQQKDNAH) are compositionally biased toward basic and acidic residues. Residues 1007–1041 (THSQSQIQDQNHSQNQAIHNSMSQDPYSNLHTTAM) show a composition bias toward polar residues. Residues 1047 to 1056 (FDEDADMDLE) show a composition bias toward acidic residues. Over residues 1057–1073 (LESHDFDLVDPDEHGDT) the composition is skewed to basic and acidic residues.

This sequence belongs to the CUT homeobox family. In terms of tissue distribution, neural-specific.

The protein localises to the nucleus. Functionally, transcriptional regulator. Binds and recognize ATTG sites. The chain is Homeobox protein onecut (onecut) from Drosophila melanogaster (Fruit fly).